We begin with the raw amino-acid sequence, 260 residues long: (+)-borneol dehydrogenase 1 (260 aa).

NAD(+) contacts are provided by residues 20-26 (GGASGIG), Asp-44, 67-68 (DV), and 94-96 (NAG). Ser-148 acts as the Proton donor in catalysis. The NAD(+) site is built by Tyr-161, Lys-165, and Thr-196. Catalysis depends on Tyr-161, which acts as the Proton acceptor. Catalysis depends on Lys-165, which acts as the Proton donor/acceptor.

Belongs to the short-chain dehydrogenases/reductases (SDR) family.

It carries out the reaction (1R,2S,4R)-borneol + NAD(+) = (1R,4R)-camphor + NADH + H(+). In terms of biological role, involved in the biosynthesis of monoterpene natural products related to camphor. Catalayzes the oxidation of (+)-borneol to (+)-camphor. Shows absolute selectivity towards (+)-borneol. Catalyzes the oxidation of (+)-isoborneol to (-)-camphor. Shows absolute selectivity towards (+)-isoborneol. This Salvia officinalis (Sage) protein is (+)-borneol dehydrogenase 1.